Here is an 88-residue protein sequence, read N- to C-terminus: EKC/KEOPS complex subunit SPAC4H3.13 (88 aa).

It belongs to the CTAG/PCC1 family. Component of the EKC/KEOPS complex composed of at least of SPAP27G11.07c/BUD32, cgi121, gon7, pgp2 and SPAC4H3.13/PCC1; the whole complex dimerizes.

The protein resides in the cytoplasm. The protein localises to the nucleus. It localises to the chromosome. It is found in the telomere. Its function is as follows. Component of the EKC/KEOPS complex that is required for the formation of a threonylcarbamoyl group on adenosine at position 37 (t(6)A37) in tRNAs that read codons beginning with adenine. The complex is probably involved in the transfer of the threonylcarbamoyl moiety of threonylcarbamoyl-AMP (TC-AMP) to the N6 group of A37. SPAC4H3.13/PCC1 functions as a dimerization module for the complex. The EKC/KEOPS complex also promotes both telomere uncapping and telomere elongation. The complex is required for efficient recruitment of transcriptional coactivators. This chain is EKC/KEOPS complex subunit SPAC4H3.13, found in Schizosaccharomyces pombe (strain 972 / ATCC 24843) (Fission yeast).